We begin with the raw amino-acid sequence, 389 residues long: Succinate--CoA ligase [ADP-forming] subunit beta (389 aa).

The region spanning 9–236 is the ATP-grasp domain; the sequence is RDMFEAHGVP…KDAADPLEAK (228 aa). ATP is bound by residues lysine 45, 52–54, alanine 94, and glutamate 99; that span reads GRG. Positions 191 and 205 each coordinate Mg(2+). Residues asparagine 256 and 318 to 320 each bind substrate; that span reads GIT.

Belongs to the succinate/malate CoA ligase beta subunit family. Heterotetramer of two alpha and two beta subunits. Requires Mg(2+) as cofactor.

It catalyses the reaction succinate + ATP + CoA = succinyl-CoA + ADP + phosphate. The enzyme catalyses GTP + succinate + CoA = succinyl-CoA + GDP + phosphate. It functions in the pathway carbohydrate metabolism; tricarboxylic acid cycle; succinate from succinyl-CoA (ligase route): step 1/1. Succinyl-CoA synthetase functions in the citric acid cycle (TCA), coupling the hydrolysis of succinyl-CoA to the synthesis of either ATP or GTP and thus represents the only step of substrate-level phosphorylation in the TCA. The beta subunit provides nucleotide specificity of the enzyme and binds the substrate succinate, while the binding sites for coenzyme A and phosphate are found in the alpha subunit. In Pseudarthrobacter chlorophenolicus (strain ATCC 700700 / DSM 12829 / CIP 107037 / JCM 12360 / KCTC 9906 / NCIMB 13794 / A6) (Arthrobacter chlorophenolicus), this protein is Succinate--CoA ligase [ADP-forming] subunit beta.